The primary structure comprises 123 residues: Large ribosomal subunit protein uL18 (123 aa).

The protein belongs to the universal ribosomal protein uL18 family. Part of the 50S ribosomal subunit; part of the 5S rRNA/L5/L18/L25 subcomplex. Contacts the 5S and 23S rRNAs.

Its function is as follows. This is one of the proteins that bind and probably mediate the attachment of the 5S RNA into the large ribosomal subunit, where it forms part of the central protuberance. This is Large ribosomal subunit protein uL18 from Wolbachia pipientis subsp. Culex pipiens (strain wPip).